The primary structure comprises 710 residues: Adenylosuccinate synthetase (710 aa).

The interval M1–Y54 is disordered. Positions Y10–R25 are enriched in polar residues. The span at T44–Y54 shows a compositional bias: basic and acidic residues. GTP contacts are provided by residues G180 to K186 and G210 to T212. The Proton acceptor role is filled by D181. Mg(2+)-binding residues include D181 and G210. IMP contacts are provided by residues D181 to K184, N208 to H211, T295, K309, Q421, T437, and K567. Catalysis depends on H211, which acts as the Proton donor. Residue A563 to R569 coordinates substrate. GTP contacts are provided by residues R569 and G697–G699.

The protein belongs to the adenylosuccinate synthetase family. In terms of assembly, homodimer. It depends on Mg(2+) as a cofactor.

Its subcellular location is the cytoplasm. The catalysed reaction is IMP + L-aspartate + GTP = N(6)-(1,2-dicarboxyethyl)-AMP + GDP + phosphate + 2 H(+). It participates in purine metabolism; AMP biosynthesis via de novo pathway; AMP from IMP: step 1/2. Its function is as follows. Plays an important role in the salvage pathway for purine nucleotide biosynthesis. Catalyzes the first committed step in the biosynthesis of AMP from IMP. In Leishmania major, this protein is Adenylosuccinate synthetase.